The sequence spans 404 residues: LL-diaminopimelate aminotransferase (404 aa).

Tyrosine 15 and glycine 42 together coordinate substrate. Pyridoxal 5'-phosphate contacts are provided by residues tyrosine 72, 108–109, tyrosine 132, asparagine 188, tyrosine 219, and 247–249; these read AK and SFS. Residues lysine 109, tyrosine 132, and asparagine 188 each contribute to the substrate site. Lysine 250 carries the post-translational modification N6-(pyridoxal phosphate)lysine. Arginine 258 and asparagine 288 together coordinate pyridoxal 5'-phosphate. 2 residues coordinate substrate: asparagine 288 and arginine 384.

Belongs to the class-I pyridoxal-phosphate-dependent aminotransferase family. LL-diaminopimelate aminotransferase subfamily. As to quaternary structure, homodimer. Pyridoxal 5'-phosphate is required as a cofactor.

It carries out the reaction (2S,6S)-2,6-diaminopimelate + 2-oxoglutarate = (S)-2,3,4,5-tetrahydrodipicolinate + L-glutamate + H2O + H(+). The protein operates within amino-acid biosynthesis; L-lysine biosynthesis via DAP pathway; LL-2,6-diaminopimelate from (S)-tetrahydrodipicolinate (aminotransferase route): step 1/1. Functionally, involved in the synthesis of meso-diaminopimelate (m-DAP or DL-DAP), required for both lysine and peptidoglycan biosynthesis. Catalyzes the direct conversion of tetrahydrodipicolinate to LL-diaminopimelate. The sequence is that of LL-diaminopimelate aminotransferase from Lachnospira eligens (strain ATCC 27750 / DSM 3376 / VPI C15-48 / C15-B4) (Eubacterium eligens).